Here is a 504-residue protein sequence, read N- to C-terminus: Maturase K (504 aa).

The protein belongs to the intron maturase 2 family. MatK subfamily.

It localises to the plastid. Its subcellular location is the chloroplast. Usually encoded in the trnK tRNA gene intron. Probably assists in splicing its own and other chloroplast group II introns. The polypeptide is Maturase K (Gossypium turneri (Cotton)).